The following is a 377-amino-acid chain: Chaperone protein DnaJ (377 aa).

Positions 5–70 constitute a J domain; it reads DFYEVLGVER…SKRAAYDQYG (66 aa). The CR-type zinc-finger motif lies at 136–214; the sequence is GTTVTIRVPT…CHGQGRVEEQ (79 aa). Positions 149, 152, 166, 169, 188, 191, 202, and 205 each coordinate Zn(2+). 4 CXXCXGXG motif repeats span residues 149 to 156, 166 to 173, 188 to 195, and 202 to 209; these read CKTCNGSG, CTTCGGIG, CPRCHGTG, and CGSCHGQG.

Belongs to the DnaJ family. In terms of assembly, homodimer. Requires Zn(2+) as cofactor.

It is found in the cytoplasm. Participates actively in the response to hyperosmotic and heat shock by preventing the aggregation of stress-denatured proteins and by disaggregating proteins, also in an autonomous, DnaK-independent fashion. Unfolded proteins bind initially to DnaJ; upon interaction with the DnaJ-bound protein, DnaK hydrolyzes its bound ATP, resulting in the formation of a stable complex. GrpE releases ADP from DnaK; ATP binding to DnaK triggers the release of the substrate protein, thus completing the reaction cycle. Several rounds of ATP-dependent interactions between DnaJ, DnaK and GrpE are required for fully efficient folding. Also involved, together with DnaK and GrpE, in the DNA replication of plasmids through activation of initiation proteins. This Pseudomonas paraeruginosa (strain DSM 24068 / PA7) (Pseudomonas aeruginosa (strain PA7)) protein is Chaperone protein DnaJ.